Consider the following 357-residue polypeptide: NADH-quinone oxidoreductase subunit H (357 aa).

Helical transmembrane passes span 20–40, 92–112, 127–147, 165–185, 206–226, 254–274, 294–314, and 329–349; these read WLVLWTIVKIVVIAVPIILCV, ILFVVAPVVTLMPALAAWAVV, LLYVMAITSIGVYGVIVAGWA, VSYELAIGFVLVTVLLVSGSL, FLSWNWLPLLPLFVIYVISAV, MAFALFFLGEYANMILLSCMA, IPGWIWLGIKTFCVVSLFVWF, and LGWKIFIPLTGVWLVVVAIWM.

The protein belongs to the complex I subunit 1 family. NDH-1 is composed of 14 different subunits. Subunits NuoA, H, J, K, L, M, N constitute the membrane sector of the complex.

The protein resides in the cell inner membrane. The catalysed reaction is a quinone + NADH + 5 H(+)(in) = a quinol + NAD(+) + 4 H(+)(out). Functionally, NDH-1 shuttles electrons from NADH, via FMN and iron-sulfur (Fe-S) centers, to quinones in the respiratory chain. The immediate electron acceptor for the enzyme in this species is believed to be ubiquinone. Couples the redox reaction to proton translocation (for every two electrons transferred, four hydrogen ions are translocated across the cytoplasmic membrane), and thus conserves the redox energy in a proton gradient. This subunit may bind ubiquinone. In Bordetella petrii (strain ATCC BAA-461 / DSM 12804 / CCUG 43448), this protein is NADH-quinone oxidoreductase subunit H.